Reading from the N-terminus, the 363-residue chain is MPHSYPALSAEQKKELSDIALRIVAPGKGILAADESVGSMAKRLSQIGVENTEENRRLYRQVLFSADDRVKKCIGGVIFFHETLYQKDDNGVPFVRTIQEKGILVGIKVDKGVVPLAGTDGETTTQGLDGLLERCAQYKKDGADFAKWRCVLKISDRTPSALAILENANVLARYASICQQNGIVPIVEPEILPDGDHDLKRCQFVTEKVLAAVYKALSDHHVYLEGTLLKPNMVTPGHACPIKYSPEEIAMATVTALRRTVPPAVPGVTFLSGGQSEEEASLNLNAINRCSLPRPWALTFSYGRALQASALSAWRGQRDNAGAATEEFIKRAEMNGLAAQGKYEGSGDGGAAAQSLYVANHAY.

At Y5 the chain carries Phosphotyrosine. 3 positions are modified to phosphoserine: S36, S39, and S45. Residue R56 coordinates substrate. K111 is subject to N6-acetyllysine. K147 provides a ligand contact to substrate. The active-site Proton acceptor is the E188. K230 functions as the Schiff-base intermediate with dihydroxyacetone-P in the catalytic mechanism.

Belongs to the class I fructose-bisphosphate aldolase family. Homotetramer. Interacts with ATP6V1E1. In terms of tissue distribution, high expression in the adult brain.

The catalysed reaction is beta-D-fructose 1,6-bisphosphate = D-glyceraldehyde 3-phosphate + dihydroxyacetone phosphate. It functions in the pathway carbohydrate degradation; glycolysis; D-glyceraldehyde 3-phosphate and glycerone phosphate from D-glucose: step 4/4. The protein is Fructose-bisphosphate aldolase C (Aldoc) of Rattus norvegicus (Rat).